Reading from the N-terminus, the 43-residue chain is Protein PsbN (43 aa).

Residues 5-25 (TLISVFVASLVIGITAYAIFV) traverse the membrane as a helical segment.

It belongs to the PsbN family.

Its subcellular location is the plastid. The protein resides in the chloroplast thylakoid membrane. Its function is as follows. May play a role in photosystem I and II biogenesis. This Cyanidioschyzon merolae (strain NIES-3377 / 10D) (Unicellular red alga) protein is Protein PsbN.